The sequence spans 470 residues: MKLPSGLGSIHFVGIGGIGMSGIAEVLHNLGYEVQGSDVADSANVKRLRDLGIKVMIGHSAVNVDDADVVVVSSAIKRDNPELVAARTKRLPVVRRAEMLAELMRLKSCVSIAGTHGKTTTTSMVAALLDAGNFDPTVINGGIINAYGTNARLGDGNWMVVEADESDGTFLKLPTEVAIVTNVDPEHLDHFKTFDKVQDAFKTFVENVPFYGFAVMCIDHPVVQALVGRIEDRRVITYGENPQADVRLVDVDLKGGITRFGVVFRNRAGETVHEISGLKLPMPGKHNALNATAAIAVAHELKVPDDKIIEAIANFGGVKRRFTRTGEWNGVTVFDDYGHHPVEIAAVLKAARAASEGQVIAVVQPHRYSRLASLFDEFCTCFNDADHVVVAPVYAAGETPIEGADRDHLVQGLIAHGHRSVTALEGPERLAQVVGGLAKPGDYVICLGAGSISGWAYALPGELAALKPAA.

114 to 120 (GTHGKTT) is an ATP binding site.

It belongs to the MurCDEF family.

It is found in the cytoplasm. It carries out the reaction UDP-N-acetyl-alpha-D-muramate + L-alanine + ATP = UDP-N-acetyl-alpha-D-muramoyl-L-alanine + ADP + phosphate + H(+). The protein operates within cell wall biogenesis; peptidoglycan biosynthesis. In terms of biological role, cell wall formation. This chain is UDP-N-acetylmuramate--L-alanine ligase, found in Xanthobacter autotrophicus (strain ATCC BAA-1158 / Py2).